A 563-amino-acid polypeptide reads, in one-letter code: F-box/kelch-repeat protein At5g42360 (563 aa).

One can recognise an F-box domain in the interval 129 to 175; it reads YRKHVYLPDDILEMCLMRLPLTSLLNAHLVCKKWQSMANTQRFLQMR. Kelch repeat units lie at residues 184–231, 232–282, and 355–402; these read WLFL…SIHE, EIYI…ATEV, and VLIA…IICN.

This Arabidopsis thaliana (Mouse-ear cress) protein is F-box/kelch-repeat protein At5g42360.